The sequence spans 386 residues: Protein-glutamate methylesterase/protein-glutamine glutaminase 3 (386 aa).

A Response regulatory domain is found at 4 to 121; sequence KVLVVDDSGF…SRNPQKVKQL (118 aa). Aspartate 55 carries the 4-aspartylphosphate modification. The segment covering 132–194 has biased composition (low complexity); sequence SNRRSSGFGS…SHAPAHPTTS (63 aa). Residues 132–197 are disordered; it reads SNRRSSGFGS…PAHPTTSGTA (66 aa). Residues 191–383 form the CheB-type methylesterase domain; it reads PTTSGTAKRK…LDDIGRHLVE (193 aa). Residues serine 210, histidine 237, and aspartate 330 contribute to the active site.

The protein belongs to the CheB family. Phosphorylated by CheA. Phosphorylation of the N-terminal regulatory domain activates the methylesterase activity.

Its subcellular location is the cytoplasm. The enzyme catalyses [protein]-L-glutamate 5-O-methyl ester + H2O = L-glutamyl-[protein] + methanol + H(+). The catalysed reaction is L-glutaminyl-[protein] + H2O = L-glutamyl-[protein] + NH4(+). In terms of biological role, involved in chemotaxis. Part of a chemotaxis signal transduction system that modulates chemotaxis in response to various stimuli. Catalyzes the demethylation of specific methylglutamate residues introduced into the chemoreceptors (methyl-accepting chemotaxis proteins or MCP) by CheR. Also mediates the irreversible deamidation of specific glutamine residues to glutamic acid. The sequence is that of Protein-glutamate methylesterase/protein-glutamine glutaminase 3 from Pseudomonas syringae pv. syringae (strain B728a).